The sequence spans 431 residues: MATASLDTARPERRAGSDPFIEKTPEVRPEAMVATGRPSLVGLTRGALRERLAAIGVPEREQRMRTGQLWHWINVRGAASFEAMTNVGKGLKAQLEEAYTLDRPEVVSEQVSRDGTRKWLLRMPPTGRHDHNRGAEIECVYIPANDRGTLCVSSQVGCTLTCSFCHTGTQRLVRNLSAQEITAQLVVARDRLGDWPGQVPPKGTFVPVDGSRFVSNIVFMGMGEPLYNVDNVVDAVGVMSDNEGLGLSRRRITVSTSGVVPQFERLGIDANAMLAISLHAVRDDLRDELVPLNRKYPIRTLLEACRNYPGVSNARRITFEYVMLKGVNDSDSEARELVRLLKGIPAKINLIPFNPWPGSRYECSDWERIERFSEIVFNAGYASPVRTPRGRDILAACGQLKSETEKLRARARLMLEDGIGAEGVYGAVDDD.

The segment at Met-1 to Glu-26 is disordered. The segment covering Ala-9 to Glu-26 has biased composition (basic and acidic residues). The Proton acceptor role is filled by Glu-138. The 251-residue stretch at Ala-144–Leu-394 folds into the Radical SAM core domain. The cysteines at positions 151 and 397 are disulfide-linked. Residues Cys-158, Cys-162, and Cys-165 each coordinate [4Fe-4S] cluster. S-adenosyl-L-methionine-binding positions include Gly-223 to Glu-224, Ser-255, Ser-277 to His-279, and Asn-354. Catalysis depends on Cys-397, which acts as the S-methylcysteine intermediate.

The protein belongs to the radical SAM superfamily. RlmN family. [4Fe-4S] cluster is required as a cofactor.

The protein localises to the cytoplasm. The catalysed reaction is adenosine(2503) in 23S rRNA + 2 reduced [2Fe-2S]-[ferredoxin] + 2 S-adenosyl-L-methionine = 2-methyladenosine(2503) in 23S rRNA + 5'-deoxyadenosine + L-methionine + 2 oxidized [2Fe-2S]-[ferredoxin] + S-adenosyl-L-homocysteine. It carries out the reaction adenosine(37) in tRNA + 2 reduced [2Fe-2S]-[ferredoxin] + 2 S-adenosyl-L-methionine = 2-methyladenosine(37) in tRNA + 5'-deoxyadenosine + L-methionine + 2 oxidized [2Fe-2S]-[ferredoxin] + S-adenosyl-L-homocysteine. Specifically methylates position 2 of adenine 2503 in 23S rRNA and position 2 of adenine 37 in tRNAs. m2A2503 modification seems to play a crucial role in the proofreading step occurring at the peptidyl transferase center and thus would serve to optimize ribosomal fidelity. This chain is Dual-specificity RNA methyltransferase RlmN, found in Methylobacterium sp. (strain 4-46).